Here is a 97-residue protein sequence, read N- to C-terminus: Aspartyl/glutamyl-tRNA(Asn/Gln) amidotransferase subunit C (97 aa).

This sequence belongs to the GatC family. Heterotrimer of A, B and C subunits.

It carries out the reaction L-glutamyl-tRNA(Gln) + L-glutamine + ATP + H2O = L-glutaminyl-tRNA(Gln) + L-glutamate + ADP + phosphate + H(+). It catalyses the reaction L-aspartyl-tRNA(Asn) + L-glutamine + ATP + H2O = L-asparaginyl-tRNA(Asn) + L-glutamate + ADP + phosphate + 2 H(+). Allows the formation of correctly charged Asn-tRNA(Asn) or Gln-tRNA(Gln) through the transamidation of misacylated Asp-tRNA(Asn) or Glu-tRNA(Gln) in organisms which lack either or both of asparaginyl-tRNA or glutaminyl-tRNA synthetases. The reaction takes place in the presence of glutamine and ATP through an activated phospho-Asp-tRNA(Asn) or phospho-Glu-tRNA(Gln). This Listeria innocua serovar 6a (strain ATCC BAA-680 / CLIP 11262) protein is Aspartyl/glutamyl-tRNA(Asn/Gln) amidotransferase subunit C.